A 152-amino-acid chain; its full sequence is Ubiquitin-conjugating enzyme E2 1 (152 aa).

The UBC core domain occupies 4–150; that stretch reads PARKRLMRDF…VRDVVEQSWT (147 aa). Cys88 serves as the catalytic Glycyl thioester intermediate. The disordered stretch occupies residues 119–152; sequence NSPANSEAARMYSESKREYNRRVRDVVEQSWTAD. Residues 131-145 are compositionally biased toward basic and acidic residues; that stretch reads SESKREYNRRVRDVV.

This sequence belongs to the ubiquitin-conjugating enzyme family. Ubiquitously expressed.

The catalysed reaction is S-ubiquitinyl-[E1 ubiquitin-activating enzyme]-L-cysteine + [E2 ubiquitin-conjugating enzyme]-L-cysteine = [E1 ubiquitin-activating enzyme]-L-cysteine + S-ubiquitinyl-[E2 ubiquitin-conjugating enzyme]-L-cysteine.. The protein operates within protein modification; protein ubiquitination. In terms of biological role, accepts the ubiquitin from the E1 complex and catalyzes its covalent attachment to other proteins. The chain is Ubiquitin-conjugating enzyme E2 1 (UBC1) from Arabidopsis thaliana (Mouse-ear cress).